The following is a 215-amino-acid chain: MAKSTVNKLSVSVRTNTGKGASRRARRDGKVPAVLYGHGEEPQHLELPAHAFSAVLRHVGTNAVLTLEVAGKEQLALTKAIDVHPIRHTIMHADLLVVRSGEKIVVEVPVEVEGDAGPDILVTQETTSIEIEAEALSIPEQLTMSIEGAEPGTQFTARQIPLPVGVTLVSDPEMLVVNVVNAPTDAQTKAKYAGEAHEAPEVGTAENKTAATESE.

Composition is skewed to polar residues over residues 1–19 and 206–215; these read MAKSTVNKLSVSVRTNTGK and ENKTAATESE. Disordered regions lie at residues 1 to 29 and 190 to 215; these read MAKSTVNKLSVSVRTNTGKGASRRARRDG and AKYAGEAHEAPEVGTAENKTAATESE.

Belongs to the bacterial ribosomal protein bL25 family. CTC subfamily. As to quaternary structure, part of the 50S ribosomal subunit; part of the 5S rRNA/L5/L18/L25 subcomplex. Contacts the 5S rRNA. Binds to the 5S rRNA independently of L5 and L18.

This is one of the proteins that binds to the 5S RNA in the ribosome where it forms part of the central protuberance. This is Large ribosomal subunit protein bL25 from Mycobacterium leprae (strain TN).